The following is a 336-amino-acid chain: UDP-3-O-acylglucosamine N-acyltransferase (336 aa).

The active-site Proton acceptor is H233.

Belongs to the transferase hexapeptide repeat family. LpxD subfamily. Homotrimer.

The enzyme catalyses a UDP-3-O-[(3R)-3-hydroxyacyl]-alpha-D-glucosamine + a (3R)-hydroxyacyl-[ACP] = a UDP-2-N,3-O-bis[(3R)-3-hydroxyacyl]-alpha-D-glucosamine + holo-[ACP] + H(+). It functions in the pathway bacterial outer membrane biogenesis; LPS lipid A biosynthesis. In terms of biological role, catalyzes the N-acylation of UDP-3-O-acylglucosamine using 3-hydroxyacyl-ACP as the acyl donor. Is involved in the biosynthesis of lipid A, a phosphorylated glycolipid that anchors the lipopolysaccharide to the outer membrane of the cell. In Helicobacter pylori (strain HPAG1), this protein is UDP-3-O-acylglucosamine N-acyltransferase.